A 588-amino-acid chain; its full sequence is Neopullulanase (588 aa).

Positions 147, 149, 153, 172, and 174 each coordinate Ca(2+). Substrate contacts are provided by H247 and R326. The active-site Nucleophile is D328. E357 serves as the catalytic Proton donor. Substrate is bound by residues 423–424, D468, and R472; that span reads HD.

The protein belongs to the glycosyl hydrolase 13 family. Homodimer. Ca(2+) serves as cofactor.

The catalysed reaction is Hydrolysis of pullulan to panose (6-alpha-D-glucosylmaltose).. In terms of biological role, hydrolyzes pullulan efficiently but only a small amount of starch. Endohydrolysis of 1,4-alpha-glucosidic linkages in pullulan to form panose. Also cleaves (1-6)-alpha-glucosidic linkages to form maltotriose. This chain is Neopullulanase (nplT), found in Geobacillus stearothermophilus (Bacillus stearothermophilus).